The primary structure comprises 238 residues: Cysteine-rich venom protein pseudechetoxin-like (238 aa).

An N-terminal signal peptide occupies residues 1 to 19 (MIAFTVLLSLAAVLQQSSG). Positions 20-28 (TVDFASESS) are excised as a propeptide. One can recognise an SCP domain in the interval 38 to 164 (VDKHNDLRRS…STKYLYVCQY (127 aa)). Cystine bridges form between Cys-75-Cys-153, Cys-92-Cys-165, Cys-148-Cys-162, Cys-184-Cys-191, Cys-187-Cys-196, Cys-200-Cys-233, Cys-209-Cys-227, and Cys-218-Cys-231. One can recognise a ShKT domain in the interval 200 to 233 (CKHNNDFSNCKALAKKSKCQTEWIKSKCPATCFC).

The protein belongs to the CRISP family. As to expression, expressed by the venom gland.

Its subcellular location is the secreted. Functionally, blocks olfactory (CNGA2) and retinal (CNGA1) CNG channel currents. Does not affect neither depolarization- nor caffeine-induced contraction of smooth muscle. The polypeptide is Cysteine-rich venom protein pseudechetoxin-like (Oxyuranus scutellatus scutellatus (Australian taipan)).